A 466-amino-acid chain; its full sequence is Argininosuccinate lyase (466 aa).

3 residues coordinate 2-(N(omega)-L-arginino)succinate: S27, N114, and T159. The Proton acceptor role is filled by H160. The Proton donor role is filled by S281. Residues N289, Y321, Q326, and K329 each coordinate 2-(N(omega)-L-arginino)succinate.

The protein belongs to the lyase 1 family. Argininosuccinate lyase subfamily. Homotetramer. In terms of tissue distribution, eye lens.

The catalysed reaction is 2-(N(omega)-L-arginino)succinate = fumarate + L-arginine. It participates in amino-acid biosynthesis; L-arginine biosynthesis; L-arginine from L-ornithine and carbamoyl phosphate: step 3/3. In terms of biological role, delta crystallin, the principal crystallin in embryonic lens, is found only in birds and reptiles. This protein may also function as an enzymatically active argininosuccinate lyase. The chain is Argininosuccinate lyase (ASL2) from Gallus gallus (Chicken).